The chain runs to 101 residues: Integration host factor subunit beta (101 aa).

It belongs to the bacterial histone-like protein family. Heterodimer of an alpha and a beta chain.

This protein is one of the two subunits of integration host factor, a specific DNA-binding protein that functions in genetic recombination as well as in transcriptional and translational control. The sequence is that of Integration host factor subunit beta from Janthinobacterium sp. (strain Marseille) (Minibacterium massiliensis).